Reading from the N-terminus, the 454-residue chain is Inner membrane transport protein YajR (454 aa).

The Periplasmic segment spans residues 1-14 (MNDYKMTPGERRAT). A helical membrane pass occupies residues 15–35 (WGLGTVFSLRMLGMFMVLPVL). Over 36-47 (TTYGMALQGASE) the chain is Cytoplasmic. The helical transmembrane segment at 48–68 (ALIGIAIGIYGLTQAVFQIPF) threads the bilayer. At 69 to 84 (GLLSDRIGRKPLIVGG) the chain is on the periplasmic side. The helical transmembrane segment at 85-105 (LAVFAAGSVIAALSDSIWGII) threads the bilayer. Topologically, residues 106-137 (LGRALQGSGAIAAAVMALLSDLTREQNRTKAM) are cytoplasmic. A helical transmembrane segment spans residues 138-158 (AFIGVSFGITFAIAMVLGPII). Over 159–165 (THKLGLH) the chain is Periplasmic. The helical transmembrane segment at 166 to 186 (ALFWMIAILATTGIALTIWVV) threads the bilayer. At 187-216 (PNSSTHVLNRESGMVKGSFSKVLAEPRLLK) the chain is on the cytoplasmic side. Residues 217 to 237 (LNFGIMCLHILLMSTFVALPG) form a helical membrane-spanning segment. The Periplasmic segment spans residues 238 to 252 (QLADAGFPAAEHWKV). A helical transmembrane segment spans residues 253–273 (YLATMLIAFGSVVPFIIYAEV). The Cytoplasmic portion of the chain corresponds to 274–279 (KRKMKQ). A helical transmembrane segment spans residues 280–300 (VFVFCVGLIVVAEIVLWNAQT). At 301–306 (QFWQLV) the chain is on the periplasmic side. Residues 307–327 (VGVQLFFVAFNLMEALLPSLI) form a helical membrane-spanning segment. Residues 328–340 (SKESPAGYKGTAM) lie on the Cytoplasmic side of the membrane. The helical transmembrane segment at 341-361 (GVYSTSQFLGVAIGGSLGGWI) threads the bilayer. The Periplasmic portion of the chain corresponds to 362-363 (NG). A helical membrane pass occupies residues 364-384 (MFDGQGVFLAGAMLAAVWLTV). The Cytoplasmic segment spans residues 385 to 454 (ASTMKEPPYV…FEIEQAIRQA (70 aa)).

The protein belongs to the major facilitator superfamily.

It is found in the cell inner membrane. This is Inner membrane transport protein YajR (yajR) from Escherichia coli (strain K12).